A 489-amino-acid chain; its full sequence is uncharacterized protein (489 aa).

11 consecutive transmembrane segments (helical) span residues 29–49 (FIASCILFCCPGIYLAVTGLG), 67–87 (LLYALFTVCGWAGGPILKYLG), 90–110 (WALALGATGYPIYIGGLWYFD), 119–139 (IFTGAYEGIAAGLLWASTAYI), 152–172 (FIATQWTILAFGSTVGSFIAF), 186–206 (AVYIIFIIIMACAVLLAILFI), 276–296 (LNNVLFWVIQFFVPYLFTLIL), 308–328 (IIGLTIQAVVIMATLSGELGW), 351–371 (GGALVLYLLMGIQYGSSIVSV), 397–417 (AAGMCVSFGIDAAGVSFLGQG), and 418–438 (IIYFIFLFVMCASQLIMTSIF).

Its subcellular location is the membrane. This is an uncharacterized protein from Schizosaccharomyces pombe (strain 972 / ATCC 24843) (Fission yeast).